The chain runs to 286 residues: Pantothenate synthetase (286 aa).

Residue 30 to 37 participates in ATP binding; sequence MGFLHEGH. Residue H37 is the Proton donor of the active site. Position 61 (Q61) interacts with (R)-pantoate. Q61 is a beta-alanine binding site. 147 to 150 contributes to the ATP binding site; the sequence is GLKD. Q153 contacts (R)-pantoate. ATP contacts are provided by residues V176 and 184–187; that span reads KSSR.

It belongs to the pantothenate synthetase family. In terms of assembly, homodimer.

Its subcellular location is the cytoplasm. It catalyses the reaction (R)-pantoate + beta-alanine + ATP = (R)-pantothenate + AMP + diphosphate + H(+). Its pathway is cofactor biosynthesis; (R)-pantothenate biosynthesis; (R)-pantothenate from (R)-pantoate and beta-alanine: step 1/1. Catalyzes the condensation of pantoate with beta-alanine in an ATP-dependent reaction via a pantoyl-adenylate intermediate. This chain is Pantothenate synthetase, found in Bacillus velezensis (strain DSM 23117 / BGSC 10A6 / LMG 26770 / FZB42) (Bacillus amyloliquefaciens subsp. plantarum).